A 470-amino-acid polypeptide reads, in one-letter code: 6-phosphofructo-2-kinase/fructose-2,6-bisphosphatase (470 aa).

The interval methionine 1–threonine 249 is 6-phosphofructo-2-kinase. Serine 31 carries the phosphoserine; by PKA modification. Glycine 47–tyrosine 55 contacts ATP. Arginine 80 and arginine 104 together coordinate beta-D-fructose 6-phosphate. Aspartate 130 is a catalytic residue. The beta-D-fructose 6-phosphate site is built by threonine 132 and arginine 138. Cysteine 160 is an active-site residue. Asparagine 169–lysine 174 lines the ATP pocket. Residues lysine 174, arginine 195, and tyrosine 199 each contribute to the beta-D-fructose 6-phosphate site. The segment at proline 250–histidine 469 is fructose-2,6-bisphosphatase. Residue arginine 257 coordinates beta-D-fructose 2,6-bisphosphate. Residue histidine 258 is the Tele-phosphohistidine intermediate of the active site. Residues asparagine 264 and glycine 270 each coordinate beta-D-fructose 2,6-bisphosphate. The active-site Proton donor/acceptor is the glutamate 327. Beta-D-fructose 2,6-bisphosphate-binding residues include tyrosine 338, arginine 352, lysine 356, tyrosine 367, glutamine 393, and arginine 397. Residue phenylalanine 349–arginine 352 coordinates ATP. Residues glutamine 393–arginine 397 and tyrosine 429 contribute to the ATP site.

It in the C-terminal section; belongs to the phosphoglycerate mutase family. In terms of assembly, homodimer. In terms of tissue distribution, liver.

It catalyses the reaction beta-D-fructose 2,6-bisphosphate + H2O = beta-D-fructose 6-phosphate + phosphate. The enzyme catalyses beta-D-fructose 6-phosphate + ATP = beta-D-fructose 2,6-bisphosphate + ADP + H(+). Its activity is regulated as follows. Phosphorylation results in inhibition of the kinase activity. Its function is as follows. Synthesis and degradation of fructose 2,6-bisphosphate. The chain is 6-phosphofructo-2-kinase/fructose-2,6-bisphosphatase from Gallus gallus (Chicken).